Consider the following 497-residue polypeptide: 4,4'-diaponeurosporene oxygenase (497 aa).

7–19 (VIGGGLGGISAAI) contributes to the FAD binding site.

This sequence belongs to the carotenoid/retinoid oxidoreductase family. CrtP subfamily. The cofactor is FAD.

The catalysed reaction is all-trans-4,4'-diaponeurosporene + 2 AH2 + 2 O2 = 4,4'-diaponeurosporenal + 2 A + 3 H2O. Its pathway is carotenoid biosynthesis; staphyloxanthin biosynthesis; staphyloxanthin from farnesyl diphosphate: step 3/5. In terms of biological role, involved in the biosynthesis of the yellow-orange carotenoid staphyloxanthin, which plays a role in the virulence via its protective function against oxidative stress. Catalyzes the oxidation of the terminal methyl side group of 4,4'-diaponeurosporene to form 4,4'-diaponeurosporen-4-al. The polypeptide is 4,4'-diaponeurosporene oxygenase (Staphylococcus aureus (strain bovine RF122 / ET3-1)).